Here is a 337-residue protein sequence, read N- to C-terminus: UDP-3-O-acylglucosamine N-acyltransferase (337 aa).

His238 acts as the Proton acceptor in catalysis.

The protein belongs to the transferase hexapeptide repeat family. LpxD subfamily. In terms of assembly, homotrimer.

The catalysed reaction is a UDP-3-O-[(3R)-3-hydroxyacyl]-alpha-D-glucosamine + a (3R)-hydroxyacyl-[ACP] = a UDP-2-N,3-O-bis[(3R)-3-hydroxyacyl]-alpha-D-glucosamine + holo-[ACP] + H(+). It functions in the pathway bacterial outer membrane biogenesis; LPS lipid A biosynthesis. Catalyzes the N-acylation of UDP-3-O-acylglucosamine using 3-hydroxyacyl-ACP as the acyl donor. Is involved in the biosynthesis of lipid A, a phosphorylated glycolipid that anchors the lipopolysaccharide to the outer membrane of the cell. This Xanthomonas oryzae pv. oryzae (strain MAFF 311018) protein is UDP-3-O-acylglucosamine N-acyltransferase.